Here is a 363-residue protein sequence, read N- to C-terminus: Isopentenyl-diphosphate delta-isomerase (363 aa).

6-7 (RK) lines the substrate pocket. Residues 64 to 66 (AMT), Ser-94, and Asn-123 contribute to the FMN site. A substrate-binding site is contributed by Gln-153. Glu-154 provides a ligand contact to Mg(2+). Residues Lys-185, Ser-210, Thr-215, 259–261 (GVR), and 280–281 (SA) each bind FMN.

This sequence belongs to the IPP isomerase type 2 family. Homooctamer. Dimer of tetramers. Mg(2+) serves as cofactor. FMN is required as a cofactor. Requires NADPH as cofactor.

The protein localises to the cytoplasm. It carries out the reaction isopentenyl diphosphate = dimethylallyl diphosphate. Involved in the biosynthesis of isoprenoids. Catalyzes the 1,3-allylic rearrangement of the homoallylic substrate isopentenyl (IPP) to its allylic isomer, dimethylallyl diphosphate (DMAPP). The protein is Isopentenyl-diphosphate delta-isomerase of Streptomyces sp. (strain CL190).